Consider the following 930-residue polypeptide: Kinesin-like protein KIN-7J (930 aa).

The region spanning 9–273 is the Kinesin motor domain; the sequence is KILVSVRVRP…TLGTVIRKLR (265 aa). Residue 95–102 coordinates ATP; it reads GQTSSGKT. Disordered stretches follow at residues 449-569 and 655-686; these read LKNS…IGTD and MQTK…SLKD. Residues 459 to 468 are compositionally biased toward low complexity; sequence SVEAQESQES. Basic and acidic residues-rich tracts occupy residues 473-482 and 533-558; these read EQMKNEERKM and AKLD…KDCN. Residues 666-681 show a composition bias toward low complexity; the sequence is TSSISFDSGSSTSIDT. Lys805 participates in a covalent cross-link: Glycyl lysine isopeptide (Lys-Gly) (interchain with G-Cter in ubiquitin).

The protein belongs to the TRAFAC class myosin-kinesin ATPase superfamily. Kinesin family. KIN-7 subfamily.

This is Kinesin-like protein KIN-7J from Arabidopsis thaliana (Mouse-ear cress).